Consider the following 401-residue polypeptide: Beta-lactamase (401 aa).

The signal sequence occupies residues 1–39 (MKLFTSTLTAKKSSTHKPLISLALSVLISTLLISETAQA). The active-site Acyl-ester intermediate is serine 102. Tyrosine 188 serves as the catalytic Proton acceptor. Substrate is bound at residue 353 to 355 (KTG).

It belongs to the class-C beta-lactamase family.

The protein localises to the secreted. It carries out the reaction a beta-lactam + H2O = a substituted beta-amino acid. Functionally, this protein is a serine beta-lactamase with a substrate specificity for cephalosporins. The chain is Beta-lactamase (ampC) from Psychrobacter immobilis.